We begin with the raw amino-acid sequence, 430 residues long: Cell wall protein ECM33 (430 aa).

A signal peptide spans 1–19 (MQFKNALTATAILSASALA). N-linked (GlcNAc...) asparagine glycosylation is found at Asn-22, Asn-57, Asn-83, Asn-197, Asn-210, Asn-228, Asn-235, Asn-242, Asn-268, Asn-280, Asn-305, and Asn-329. Position 340 is a phosphoserine (Ser-340). Low complexity predominate over residues 362 to 402 (LSSTSTESSKSSATSSASSSGDASNAQASVSASASSSSSSS). Residues 362–411 (LSSTSTESSKSSATSSASSSGDASNAQASVSASASSSSSSSKKSKGAAPE) are disordered. Gly-407 carries the GPI-anchor amidated glycine lipid modification. A propeptide spans 408–430 (AAPELVPATSFMGVVAAVAVALL) (removed in mature form).

Belongs to the SPS2 family. Post-translationally, the GPI-anchor is attached to the protein in the endoplasmic reticulum and serves to target the protein to the cell surface. There, the glucosamine-inositol phospholipid moiety is cleaved off and the GPI-modified mannoprotein is covalently attached via its lipidless GPI glycan remnant to the 1,6-beta-glucan of the outer cell wall layer.

Its subcellular location is the cell membrane. It is found in the secreted. It localises to the cell wall. Functionally, required for proper cell wall integrity and for the correct assembly of the mannoprotein outer layer of the cell wall. Important for apical bud growth. This chain is Cell wall protein ECM33 (ECM33), found in Saccharomyces cerevisiae (strain JAY291) (Baker's yeast).